The following is a 131-amino-acid chain: Large ribosomal subunit protein bL17 (131 aa).

It belongs to the bacterial ribosomal protein bL17 family. Part of the 50S ribosomal subunit. Contacts protein L32.

The protein is Large ribosomal subunit protein bL17 of Teredinibacter turnerae (strain ATCC 39867 / T7901).